A 231-amino-acid polypeptide reads, in one-letter code: Transcriptional regulator NRG1 (231 aa).

Ser-163 is subject to Phosphoserine. 2 C2H2-type zinc fingers span residues 174 to 196 (YICK…NRIH) and 202 to 226 (HCCP…YRTH).

The protein resides in the nucleus. Its function is as follows. Transcriptional repressor involved in regulation of glucose repression. Binds to UAS-1 in the STA1 promoter. In Saccharomyces cerevisiae (strain ATCC 204508 / S288c) (Baker's yeast), this protein is Transcriptional regulator NRG1 (NRG1).